The chain runs to 467 residues: A-type ATP synthase subunit B (467 aa).

A disordered region spans residues 95 to 114 (GKGQPRDHMPLPPPEDFRDV).

It belongs to the ATPase alpha/beta chains family. As to quaternary structure, has multiple subunits with at least A(3), B(3), C, D, E, F, H, I and proteolipid K(x).

It localises to the cell membrane. Its function is as follows. Component of the A-type ATP synthase that produces ATP from ADP in the presence of a proton gradient across the membrane. The B chain is a regulatory subunit. This is A-type ATP synthase subunit B from Pyrobaculum neutrophilum (strain DSM 2338 / JCM 9278 / NBRC 100436 / V24Sta) (Thermoproteus neutrophilus).